The chain runs to 459 residues: D(1)-like dopamine receptor (459 aa).

Over Met1–Arg23 the chain is Extracellular. An N-linked (GlcNAc...) asparagine glycan is attached at Asn4. A helical transmembrane segment spans residues Val24–Thr49. At Lys50–Asn60 the chain is on the cytoplasmic side. Residues Phe61–Met87 form a helical membrane-spanning segment. Residues Gly88–Cys96 are Extracellular-facing. A disulfide bond links Cys96 and Cys187. Residues Asn97–Val119 form a helical membrane-spanning segment. At Asp120 to Lys138 the chain is on the cytoplasmic side. Residues Val139–His164 form a helical membrane-spanning segment. Residues Lys165–Leu191 lie on the Extracellular side of the membrane. The chain crosses the membrane as a helical span at residues Asn192–Thr216. At Arg217 to Leu269 the chain is on the cytoplasmic side. Residues Lys270–Glu297 form a helical membrane-spanning segment. Topologically, residues Ala298–Thr311 are extracellular. Residues Phe312 to Asn333 traverse the membrane as a helical segment. Residues Ala334–Cys459 are Cytoplasmic-facing.

It belongs to the G-protein coupled receptor 1 family.

The protein localises to the cell membrane. It localises to the cell projection. It is found in the cilium membrane. In terms of biological role, receptor for dopamine. The polypeptide is D(1)-like dopamine receptor (d14) (Takifugu rubripes (Japanese pufferfish)).